Consider the following 727-residue polypeptide: Putative inactive disease susceptibility protein LOV1 (727 aa).

The 293-residue stretch at 44–336 (EQSVEALAGH…AAEGIITSSD (293 aa)) folds into the NB-ARC domain. LRR repeat units lie at residues 459–484 (LPLL…IGDL), 485–507 (IHLR…LRNL), 509–530 (LLLY…LKEM), 575–600 (MTKL…LGQL), and 601–626 (RSLE…IVLN).

This sequence belongs to the disease resistance NB-LRR family. RPP8/HRT subfamily.

This chain is Putative inactive disease susceptibility protein LOV1 (LOV1), found in Arabidopsis thaliana (Mouse-ear cress).